The chain runs to 380 residues: MPDEFTVTPWEVKGKVDYDKLIVQFGTQKITEELKQRIKNLAGDLHVMLRRNVFFSHRDLDLVLNDYEKSKGFFLYTGRAPSLGMHIGHLIPFIFTKWLQEKFNANLYIEITDDEKYMRNPEFTLDQTRSWAYDNILDIIAVGFNPDKTFIFQDTEYIRNMYPITVKIAKKLTFSEVRATFGLDASSNIGLIFYPALQIAPTMFEKKRCLIPAGIDQDPYWRLQRDIAESLGYYKAAQIHSKFLPPLTGPEGKMSSSNPETAIYLVDDPKTVERKIMKYAFSGGQPTIELHRKYGGNPEIDVPFQWLYYFFEEDDNRIKEIEEEYRSGKMLTGELKQILIDKLNNFLEEHRRRREEAKELVHVFKYDGKLAKQMWEKIHE.

The short motif at 81 to 89 is the 'HIGH' region element; the sequence is PSLGMHIGH. A 'KMSKS' region motif is present at residues 253-257; the sequence is KMSSS.

The protein belongs to the class-I aminoacyl-tRNA synthetase family.

Its subcellular location is the cytoplasm. It catalyses the reaction tRNA(Trp) + L-tryptophan + ATP = L-tryptophyl-tRNA(Trp) + AMP + diphosphate + H(+). This is Tryptophan--tRNA ligase from Saccharolobus solfataricus (strain ATCC 35092 / DSM 1617 / JCM 11322 / P2) (Sulfolobus solfataricus).